The primary structure comprises 616 residues: Dihydroxy-acid dehydratase (616 aa).

Residue aspartate 81 participates in Mg(2+) binding. [2Fe-2S] cluster is bound at residue cysteine 122. Residues aspartate 123 and lysine 124 each contribute to the Mg(2+) site. Residue lysine 124 is modified to N6-carboxylysine. Cysteine 195 provides a ligand contact to [2Fe-2S] cluster. Glutamate 491 provides a ligand contact to Mg(2+). Residue serine 517 is the Proton acceptor of the active site.

Belongs to the IlvD/Edd family. Homodimer. [2Fe-2S] cluster serves as cofactor. It depends on Mg(2+) as a cofactor.

The catalysed reaction is (2R)-2,3-dihydroxy-3-methylbutanoate = 3-methyl-2-oxobutanoate + H2O. The enzyme catalyses (2R,3R)-2,3-dihydroxy-3-methylpentanoate = (S)-3-methyl-2-oxopentanoate + H2O. The protein operates within amino-acid biosynthesis; L-isoleucine biosynthesis; L-isoleucine from 2-oxobutanoate: step 3/4. Its pathway is amino-acid biosynthesis; L-valine biosynthesis; L-valine from pyruvate: step 3/4. Functionally, functions in the biosynthesis of branched-chain amino acids. Catalyzes the dehydration of (2R,3R)-2,3-dihydroxy-3-methylpentanoate (2,3-dihydroxy-3-methylvalerate) into 2-oxo-3-methylpentanoate (2-oxo-3-methylvalerate) and of (2R)-2,3-dihydroxy-3-methylbutanoate (2,3-dihydroxyisovalerate) into 2-oxo-3-methylbutanoate (2-oxoisovalerate), the penultimate precursor to L-isoleucine and L-valine, respectively. The protein is Dihydroxy-acid dehydratase of Pectobacterium carotovorum subsp. carotovorum (strain PC1).